We begin with the raw amino-acid sequence, 265 residues long: Energy-coupling factor transporter transmembrane protein EcfT (265 aa).

5 helical membrane-spanning segments follow: residues 32–52 (MVLL…VFII), 72–92 (LVII…GRVI), 115–135 (LIML…IALT), 150–170 (VPAH…PTLM), and 245–265 (LAAF…RFIW).

Belongs to the energy-coupling factor EcfT family. Forms a stable energy-coupling factor (ECF) transporter complex composed of 2 membrane-embedded substrate-binding proteins (S component), 2 ATP-binding proteins (A component) and 2 transmembrane proteins (T component). May be able to interact with more than 1 S component at a time.

The protein localises to the cell membrane. In terms of biological role, transmembrane (T) component of an energy-coupling factor (ECF) ABC-transporter complex. Unlike classic ABC transporters this ECF transporter provides the energy necessary to transport a number of different substrates. The sequence is that of Energy-coupling factor transporter transmembrane protein EcfT from Thermosediminibacter oceani (strain ATCC BAA-1034 / DSM 16646 / JW/IW-1228P).